We begin with the raw amino-acid sequence, 746 residues long: Quiannulatene synthase (746 aa).

The sesterterpenoid synthase stretch occupies residues 1 to 336 (MASEVIVISD…SRYPTKTELN (336 aa)). Aspartate 95 is a binding site for Mg(2+). The geranylfarnesyl diphosphate synthase stretch occupies residues 338–746 (PEVIIVDGEL…VELMLRRLWV (409 aa)). Lysine 465, arginine 468, and histidine 497 together coordinate isopentenyl diphosphate. Residues aspartate 504 and aspartate 508 each coordinate Mg(2+). Arginine 513 is a binding site for dimethylallyl diphosphate. Arginine 514 is a binding site for isopentenyl diphosphate. Residues lysine 591, threonine 592, glutamine 628, asparagine 635, and lysine 645 each contribute to the dimethylallyl diphosphate site.

This sequence in the N-terminal section; belongs to the terpene synthase family. In the C-terminal section; belongs to the FPP/GGPP synthase family. It depends on Mg(2+) as a cofactor.

It carries out the reaction isopentenyl diphosphate + (2E,6E)-farnesyl diphosphate = (2E,6E,10E)-geranylgeranyl diphosphate + diphosphate. The catalysed reaction is (2E,6E,10E,14E)-geranylfarnesyl diphosphate = quiannulatene + diphosphate. It participates in secondary metabolite biosynthesis; terpenoid biosynthesis. Bifunctional sesterterpene synthase; part of the gene cluster that mediates the biosynthesis of the pentacyclic sesterterpene quiannulatic acid. The first step of the pathway is performed by the sesterterpene synthase (QS) that possesses both prenyl transferase and terpene cyclase activity, converting isopentenyl diphosphate and dimethylallyl diphosphate into geranylfarnesyl diphosphate (GFPP) and further converting GFPP into quiannulatene via an unprecedented cyclization mode which involves three rounds of hydride shifts and two successive C-C bond migrations to construct the 5-6-5-5-5 fused ring. The cytochrome P450 monooxygenase Qnn-P450 then oxidizes quiannulatene at C-19 in 3 successive reactions to afford quiannulatic acid. This Emericella variicolor (Aspergillus stellatus) protein is Quiannulatene synthase.